Consider the following 92-residue polypeptide: Probable Fe(2+)-trafficking protein (92 aa).

The protein belongs to the Fe(2+)-trafficking protein family.

Could be a mediator in iron transactions between iron acquisition and iron-requiring processes, such as synthesis and/or repair of Fe-S clusters in biosynthetic enzymes. This is Probable Fe(2+)-trafficking protein from Xanthomonas oryzae pv. oryzae (strain MAFF 311018).